A 556-amino-acid chain; its full sequence is 2-succinyl-5-enolpyruvyl-6-hydroxy-3-cyclohexene-1-carboxylate synthase (556 aa).

The protein belongs to the TPP enzyme family. MenD subfamily. As to quaternary structure, homodimer. Requires Mg(2+) as cofactor. Mn(2+) serves as cofactor. It depends on thiamine diphosphate as a cofactor.

It catalyses the reaction isochorismate + 2-oxoglutarate + H(+) = 5-enolpyruvoyl-6-hydroxy-2-succinyl-cyclohex-3-ene-1-carboxylate + CO2. Its pathway is quinol/quinone metabolism; 1,4-dihydroxy-2-naphthoate biosynthesis; 1,4-dihydroxy-2-naphthoate from chorismate: step 2/7. It participates in quinol/quinone metabolism; menaquinone biosynthesis. Catalyzes the thiamine diphosphate-dependent decarboxylation of 2-oxoglutarate and the subsequent addition of the resulting succinic semialdehyde-thiamine pyrophosphate anion to isochorismate to yield 2-succinyl-5-enolpyruvyl-6-hydroxy-3-cyclohexene-1-carboxylate (SEPHCHC). In Staphylococcus epidermidis (strain ATCC 35984 / DSM 28319 / BCRC 17069 / CCUG 31568 / BM 3577 / RP62A), this protein is 2-succinyl-5-enolpyruvyl-6-hydroxy-3-cyclohexene-1-carboxylate synthase.